The chain runs to 668 residues: mRNA cap guanine-N(7) methyltransferase (668 aa).

A compositionally biased stretch (basic and acidic residues) spans 1-19 (MYDPARDSWEERDGDEARS). Positions 1–281 (MYDPARDSWE…RAQVEEAMRA (281 aa)) are disordered. Residues 44–65 (GENNNTTDLQQHPDPSSKTTAS) are compositionally biased toward polar residues. Positions 73-88 (SQPAQPTTQTPPSVST) are enriched in low complexity. The span at 100 to 129 (KASNPQSLTSTAQNQLNKSNTTMENTSGSA) shows a compositional bias: polar residues. Residues 133–142 (PRADPSDKPN) show a composition bias toward basic and acidic residues. Residues 148–157 (ASPTDQNGSQ) are compositionally biased toward polar residues. Positions 257 to 279 (LVDRETLRRRQEERERAQVEEAM) are enriched in basic and acidic residues. Residues 310–668 (SKIKGLRSFN…FYHAFCFYKV (359 aa)) enclose the mRNA cap 0 methyltransferase domain. 319 to 320 (NN) serves as a coordination point for mRNA. S-adenosyl-L-methionine contacts are provided by residues K323, G366, D390, D428, 471-473 (MFT), and Y476. Residues 524–547 (ARQAQAKKEKSDEAPEDGEVEEDD) are disordered. Residues 537–547 (APEDGEVEEDD) show a composition bias toward acidic residues.

The protein belongs to the class I-like SAM-binding methyltransferase superfamily. mRNA cap 0 methyltransferase family.

It localises to the nucleus. It carries out the reaction a 5'-end (5'-triphosphoguanosine)-ribonucleoside in mRNA + S-adenosyl-L-methionine = a 5'-end (N(7)-methyl 5'-triphosphoguanosine)-ribonucleoside in mRNA + S-adenosyl-L-homocysteine. Responsible for methylating the 5'-cap structure of mRNAs. The sequence is that of mRNA cap guanine-N(7) methyltransferase (abd1) from Aspergillus fumigatus (strain ATCC MYA-4609 / CBS 101355 / FGSC A1100 / Af293) (Neosartorya fumigata).